A 601-amino-acid polypeptide reads, in one-letter code: Keratin, type II cytoskeletal 5 (601 aa).

The head stretch occupies residues 1 to 168; that stretch reads MSRQSTVSFR…DPTIQRVRTE (168 aa). Phosphoserine is present on residues serine 5, serine 8, serine 16, and serine 21. Threonine 24 bears the Phosphothreonine; by CDK1 mark. Phosphoserine is present on residues serine 26, serine 36, serine 50, serine 64, serine 71, and serine 75. Phosphothreonine; by CDK1 is present on threonine 152. At threonine 167 the chain carries Phosphothreonine; by AURKB. The interval 169 to 204 is coil 1A; the sequence is EREQIKTLNNKFASFIDKVRFLEQQNKVLDTKWALL. One can recognise an IF rod domain in the interval 169-482; that stretch reads EREQIKTLNN…KLLEGEECRL (314 aa). Residues 205–223 are linker 1; it reads QEQGTKTVRQNLEPLLEQY. Positions 224–316 are coil 1B; sequence INNLRRQLDG…FFDAELSQMQ (93 aa). Residues 317–339 are linker 12; that stretch reads THVSDTSVVLSMDNNRSLDLDSI. Positions 340–478 are coil 2; the sequence is IAEVKAQYED…ATYRKLLEGE (139 aa). Residues 479–601 form a tail region; the sequence is ECRLSGEGVG…TSSSRKSFKS (123 aa). The segment at 576 to 601 is disordered; it reads FGSGGGSSSSVKFVSTTSSSRKSFKS. A compositionally biased stretch (low complexity) spans 583–601; sequence SSSVKFVSTTSSSRKSFKS.

This sequence belongs to the intermediate filament family. In terms of assembly, heterodimer of a type I and a type II keratin. Heterodimer with type I keratin KRT25 leading to the formation of keratin intermediate filament (KIF) network. Forms a heterodimer (via 2B domains) with KRT14 (via 2B domains). Interacts with TCHP. Interacts with EPPK1. Interacts with AMELX. Interacts with PKP1 (via N-terminus) and PKP2. In terms of processing, phosphorylated by CDK1, AURKB and Rho-kinase, phosphorylation is regulated by the cell cycle. Thr-24 phosphorylation, mediated by CDK1, peaks during prometaphase or metaphase cells with phosphorylated filamentous structures evident throughout the cytoplasm early mitosis. CDK1 phosphorylates Thr-24 in mitotic cells at the site of injury. O-glycosylated.

It localises to the cytoplasm. In terms of biological role, required for the formation of keratin intermediate filaments in the basal epidermis and maintenance of the skin barrier in response to mechanical stress. Regulates the recruitment of Langerhans cells to the epidermis, potentially by modulation of the abundance of macrophage chemotactic cytokines, macrophage inflammatory cytokines and CTNND1 localization in keratinocytes. The chain is Keratin, type II cytoskeletal 5 from Bos taurus (Bovine).